Consider the following 527-residue polypeptide: Tubulin-specific chaperone E (527 aa).

Residue Ser2 is modified to N-acetylserine. In terms of domain architecture, CAP-Gly spans 27–71; that stretch reads GVVPPVAGPWLGVEWDNPERGKHDGSHEGTVYFQCRHPTGGSFIR. 7 LRR repeats span residues 154–175, 180–200, 205–226, 230–252, 253–274, 278–299, and 308–329; these read NIRK…IHIA, HLEV…SVLT, ALKV…RCAM, GLEE…DVLQ, TVKL…YLIA, RLEQ…DAGI, and SLKY…NELD. The LRRCT domain occupies 342 to 384; the sequence is NPLTKEDKEAETARLLIIASIGQLKTLNKCEILPEERRRAELD. Lys463 carries the post-translational modification N6-acetyllysine. The residue at position 495 (Ser495) is a Phosphoserine.

It belongs to the TBCE family. Supercomplex made of cofactors A to E. Cofactors A and D function by capturing and stabilizing tubulin in a quasi-native conformation. Cofactor E binds to the cofactor D-tubulin complex; interaction with cofactor C then causes the release of tubulin polypeptides that are committed to the native state. Cofactors B and E can form a heterodimer which binds to alpha-tubulin and enhances their ability to dissociate tubulin heterodimers. Interacts with TBCD.

It is found in the cytoplasm. It localises to the cytoskeleton. Functionally, tubulin-folding protein; involved in the second step of the tubulin folding pathway and in the regulation of tubulin heterodimer dissociation. Required for correct organization of microtubule cytoskeleton and mitotic splindle, and maintenance of the neuronal microtubule network. The chain is Tubulin-specific chaperone E (TBCE) from Pongo abelii (Sumatran orangutan).